Here is a 433-residue protein sequence, read N- to C-terminus: Ribosome biogenesis protein WDR12 homolog (433 aa).

The residue at position 1 (Met-1) is an N-acetylmethionine. The ubiquitin-like (UBL) domain stretch occupies residues 12–96 (LHVKFVTKLD…ERTLEIEYIR (85 aa)). 7 WD repeats span residues 108 to 146 (LHDD…SHIL), 148 to 191 (GHSG…SVDS), 203 to 242 (GHKA…SEGE), 270 to 308 (GHTQ…DSLN), 310 to 350 (FCGK…TSAP), 356 to 396 (SHSS…PLSV), and 399 to 433 (THND…IAIS). The interval 238-263 (TSEGESVSVKKRKGNNQAEESQSEGE) is disordered.

It belongs to the WD repeat WDR12/YTM1 family. Interacts with PES. Interacts with BOP1.

It localises to the nucleus. The protein resides in the nucleolus. It is found in the nucleoplasm. In terms of biological role, required for maturation of ribosomal RNAs and formation of the large ribosomal subunit. This chain is Ribosome biogenesis protein WDR12 homolog, found in Arabidopsis thaliana (Mouse-ear cress).